We begin with the raw amino-acid sequence, 91 residues long: MPKSKITTEGSALPQSSSSATNRTPVKINSEGTPKWYIAIMLGLMLLGLLWLVVNYLAGESIPFMQELGPWNYGIGFGLAIIGLLMTMGWR.

The span at 1-24 (MPKSKITTEGSALPQSSSSATNRT) shows a compositional bias: polar residues. The disordered stretch occupies residues 1-28 (MPKSKITTEGSALPQSSSSATNRTPVKI). Helical transmembrane passes span 38–58 (IAIM…NYLA) and 68–88 (LGPW…LMTM).

It belongs to the CrgA family.

Its subcellular location is the cell membrane. Its function is as follows. Involved in cell division. In Corynebacterium aurimucosum (strain ATCC 700975 / DSM 44827 / CIP 107346 / CN-1) (Corynebacterium nigricans), this protein is Cell division protein CrgA.